A 478-amino-acid chain; its full sequence is tRNA modification GTPase MnmE (478 aa).

The (6S)-5-formyl-5,6,7,8-tetrahydrofolate site is built by R25, E82, and K135. The TrmE-type G domain maps to 231–400; the sequence is GIKVVIAGQP…LRQRLLQVVG (170 aa). A K(+)-binding site is contributed by N241. GTP is bound by residues 241–246, 260–266, and 285–288; these read NAGKSS, TPIAGTT, and DTAG. A Mg(2+)-binding site is contributed by S245. Residues T260, I262, and T265 each coordinate K(+). T266 is a binding site for Mg(2+). A (6S)-5-formyl-5,6,7,8-tetrahydrofolate-binding site is contributed by K478.

The protein belongs to the TRAFAC class TrmE-Era-EngA-EngB-Septin-like GTPase superfamily. TrmE GTPase family. In terms of assembly, homodimer. Heterotetramer of two MnmE and two MnmG subunits. The cofactor is K(+).

The protein resides in the cytoplasm. In terms of biological role, exhibits a very high intrinsic GTPase hydrolysis rate. Involved in the addition of a carboxymethylaminomethyl (cmnm) group at the wobble position (U34) of certain tRNAs, forming tRNA-cmnm(5)s(2)U34. The protein is tRNA modification GTPase MnmE of Polaromonas sp. (strain JS666 / ATCC BAA-500).